Here is a 115-residue protein sequence, read N- to C-terminus: NAD(P)H-quinone oxidoreductase subunit M (115 aa).

Belongs to the complex I NdhM subunit family. NDH-1 can be composed of about 15 different subunits; different subcomplexes with different compositions have been identified which probably have different functions.

Its subcellular location is the cellular thylakoid membrane. It catalyses the reaction a plastoquinone + NADH + (n+1) H(+)(in) = a plastoquinol + NAD(+) + n H(+)(out). The enzyme catalyses a plastoquinone + NADPH + (n+1) H(+)(in) = a plastoquinol + NADP(+) + n H(+)(out). NDH-1 shuttles electrons from an unknown electron donor, via FMN and iron-sulfur (Fe-S) centers, to quinones in the respiratory and/or the photosynthetic chain. The immediate electron acceptor for the enzyme in this species is believed to be plastoquinone. Couples the redox reaction to proton translocation, and thus conserves the redox energy in a proton gradient. Cyanobacterial NDH-1 also plays a role in inorganic carbon-concentration. This is NAD(P)H-quinone oxidoreductase subunit M from Prochlorococcus marinus (strain MIT 9313).